We begin with the raw amino-acid sequence, 393 residues long: CCA-adding enzyme (393 aa).

ATP contacts are provided by Gly-27 and Arg-30. CTP-binding residues include Gly-27 and Arg-30. 2 residues coordinate Mg(2+): Asp-40 and Asp-42. Residues Arg-111, Asp-154, Arg-157, Arg-160, and Arg-163 each coordinate ATP. The CTP site is built by Arg-111, Asp-154, Arg-157, Arg-160, and Arg-163.

Belongs to the tRNA nucleotidyltransferase/poly(A) polymerase family. Bacterial CCA-adding enzyme type 3 subfamily. As to quaternary structure, homodimer. Mg(2+) is required as a cofactor.

It carries out the reaction a tRNA precursor + 2 CTP + ATP = a tRNA with a 3' CCA end + 3 diphosphate. It catalyses the reaction a tRNA with a 3' CCA end + 2 CTP + ATP = a tRNA with a 3' CCACCA end + 3 diphosphate. In terms of biological role, catalyzes the addition and repair of the essential 3'-terminal CCA sequence in tRNAs without using a nucleic acid template. Adds these three nucleotides in the order of C, C, and A to the tRNA nucleotide-73, using CTP and ATP as substrates and producing inorganic pyrophosphate. tRNA 3'-terminal CCA addition is required both for tRNA processing and repair. Also involved in tRNA surveillance by mediating tandem CCA addition to generate a CCACCA at the 3' terminus of unstable tRNAs. While stable tRNAs receive only 3'-terminal CCA, unstable tRNAs are marked with CCACCA and rapidly degraded. This chain is CCA-adding enzyme, found in Listeria innocua serovar 6a (strain ATCC BAA-680 / CLIP 11262).